The following is a 382-amino-acid chain: 4-hydroxy-3-methylbut-2-en-1-yl diphosphate synthase (flavodoxin) (382 aa).

4 residues coordinate [4Fe-4S] cluster: C273, C276, C308, and E315.

It belongs to the IspG family. [4Fe-4S] cluster serves as cofactor.

It carries out the reaction (2E)-4-hydroxy-3-methylbut-2-enyl diphosphate + oxidized [flavodoxin] + H2O + 2 H(+) = 2-C-methyl-D-erythritol 2,4-cyclic diphosphate + reduced [flavodoxin]. Its pathway is isoprenoid biosynthesis; isopentenyl diphosphate biosynthesis via DXP pathway; isopentenyl diphosphate from 1-deoxy-D-xylulose 5-phosphate: step 5/6. Functionally, converts 2C-methyl-D-erythritol 2,4-cyclodiphosphate (ME-2,4cPP) into 1-hydroxy-2-methyl-2-(E)-butenyl 4-diphosphate. The polypeptide is 4-hydroxy-3-methylbut-2-en-1-yl diphosphate synthase (flavodoxin) (Gluconacetobacter diazotrophicus (strain ATCC 49037 / DSM 5601 / CCUG 37298 / CIP 103539 / LMG 7603 / PAl5)).